The sequence spans 147 residues: Large ribosomal subunit protein bL9 (147 aa).

It belongs to the bacterial ribosomal protein bL9 family.

Binds to the 23S rRNA. This is Large ribosomal subunit protein bL9 from Clostridium novyi (strain NT).